The chain runs to 429 residues: Patatin-like phospholipase domain-containing protein 5 (429 aa).

Residues 12–181 (LSFSGAGYLG…SNNLPFADCP (170 aa)) form the PNPLA domain. The short motif at 16–21 (GAGYLG) is the GXGXXG element. The GXSXG motif lies at 47-51 (GSSSG). Residue serine 49 is the Nucleophile of the active site. The Proton acceptor role is filled by aspartate 168. The DGA/G signature appears at 168–170 (DGA).

In terms of tissue distribution, expressed in brain and pituitary gland.

It catalyses the reaction a triacylglycerol + H2O = a diacylglycerol + a fatty acid + H(+). Has abundant triacylglycerol lipase activity. In Homo sapiens (Human), this protein is Patatin-like phospholipase domain-containing protein 5.